A 183-amino-acid polypeptide reads, in one-letter code: Acireductone dioxygenase (183 aa).

The Fe(2+) site is built by histidine 95, histidine 97, glutamate 101, and histidine 139. Residues histidine 95, histidine 97, glutamate 101, and histidine 139 each coordinate Ni(2+).

This sequence belongs to the acireductone dioxygenase (ARD) family. Monomer. The cofactor is Fe(2+). Ni(2+) serves as cofactor.

It carries out the reaction 1,2-dihydroxy-5-(methylsulfanyl)pent-1-en-3-one + O2 = 3-(methylsulfanyl)propanoate + CO + formate + 2 H(+). The catalysed reaction is 1,2-dihydroxy-5-(methylsulfanyl)pent-1-en-3-one + O2 = 4-methylsulfanyl-2-oxobutanoate + formate + 2 H(+). The protein operates within amino-acid biosynthesis; L-methionine biosynthesis via salvage pathway; L-methionine from S-methyl-5-thio-alpha-D-ribose 1-phosphate: step 5/6. Functionally, catalyzes 2 different reactions between oxygen and the acireductone 1,2-dihydroxy-3-keto-5-methylthiopentene (DHK-MTPene) depending upon the metal bound in the active site. Fe-containing acireductone dioxygenase (Fe-ARD) produces formate and 2-keto-4-methylthiobutyrate (KMTB), the alpha-ketoacid precursor of methionine in the methionine recycle pathway. Ni-containing acireductone dioxygenase (Ni-ARD) produces methylthiopropionate, carbon monoxide and formate, and does not lie on the methionine recycle pathway. The polypeptide is Acireductone dioxygenase (Aquifex aeolicus (strain VF5)).